The chain runs to 98 residues: NADH-ubiquinone oxidoreductase chain 4L (98 aa).

Helical transmembrane passes span 1–21 (MASI…GVLI), 28–48 (STLL…TLLI), and 61–81 (LILL…LVTI).

Belongs to the complex I subunit 4L family. In terms of assembly, core subunit of respiratory chain NADH dehydrogenase (Complex I) which is composed of 45 different subunits.

Its subcellular location is the mitochondrion inner membrane. The catalysed reaction is a ubiquinone + NADH + 5 H(+)(in) = a ubiquinol + NAD(+) + 4 H(+)(out). In terms of biological role, core subunit of the mitochondrial membrane respiratory chain NADH dehydrogenase (Complex I) which catalyzes electron transfer from NADH through the respiratory chain, using ubiquinone as an electron acceptor. Part of the enzyme membrane arm which is embedded in the lipid bilayer and involved in proton translocation. This is NADH-ubiquinone oxidoreductase chain 4L (MT-ND4L) from Thylamys elegans (Elegant fat-tailed mouse opossum).